The primary structure comprises 311 residues: Methionyl-tRNA formyltransferase (311 aa).

110 to 113 contributes to the (6S)-5,6,7,8-tetrahydrofolate binding site; sequence SLLP.

Belongs to the Fmt family.

The enzyme catalyses L-methionyl-tRNA(fMet) + (6R)-10-formyltetrahydrofolate = N-formyl-L-methionyl-tRNA(fMet) + (6S)-5,6,7,8-tetrahydrofolate + H(+). Functionally, attaches a formyl group to the free amino group of methionyl-tRNA(fMet). The formyl group appears to play a dual role in the initiator identity of N-formylmethionyl-tRNA by promoting its recognition by IF2 and preventing the misappropriation of this tRNA by the elongation apparatus. This chain is Methionyl-tRNA formyltransferase, found in Streptococcus pyogenes serotype M49 (strain NZ131).